A 717-amino-acid chain; its full sequence is Fatty acid oxidation complex subunit alpha (717 aa).

The enoyl-CoA hydratase/isomerase stretch occupies residues 1 to 190 (MIHAGNAITV…KDGAVDAVVA (190 aa)). Residue Asp-298 coordinates substrate. The segment at 313 to 717 (HPVNQAAVLG…MAANNKKFYG (405 aa)) is 3-hydroxyacyl-CoA dehydrogenase. NAD(+) is bound by residues Met-326, Asp-345, 402-404 (VTE), Lys-409, and Ser-431. His-452 acts as the For 3-hydroxyacyl-CoA dehydrogenase activity in catalysis. Asn-455 contacts NAD(+). Asn-502 is a substrate binding site.

The protein in the N-terminal section; belongs to the enoyl-CoA hydratase/isomerase family. In the C-terminal section; belongs to the 3-hydroxyacyl-CoA dehydrogenase family. As to quaternary structure, heterotetramer of two alpha chains (FadB) and two beta chains (FadA).

The catalysed reaction is a (3S)-3-hydroxyacyl-CoA + NAD(+) = a 3-oxoacyl-CoA + NADH + H(+). It carries out the reaction a (3S)-3-hydroxyacyl-CoA = a (2E)-enoyl-CoA + H2O. It catalyses the reaction a 4-saturated-(3S)-3-hydroxyacyl-CoA = a (3E)-enoyl-CoA + H2O. The enzyme catalyses (3S)-3-hydroxybutanoyl-CoA = (3R)-3-hydroxybutanoyl-CoA. The catalysed reaction is a (3Z)-enoyl-CoA = a 4-saturated (2E)-enoyl-CoA. It carries out the reaction a (3E)-enoyl-CoA = a 4-saturated (2E)-enoyl-CoA. The protein operates within lipid metabolism; fatty acid beta-oxidation. In terms of biological role, involved in the aerobic and anaerobic degradation of long-chain fatty acids via beta-oxidation cycle. Catalyzes the formation of 3-oxoacyl-CoA from enoyl-CoA via L-3-hydroxyacyl-CoA. It can also use D-3-hydroxyacyl-CoA and cis-3-enoyl-CoA as substrate. The polypeptide is Fatty acid oxidation complex subunit alpha (Acinetobacter baumannii (strain SDF)).